The following is a 635-amino-acid chain: Threonine--tRNA ligase (635 aa).

One can recognise a TGS domain in the interval 1-61 (MITVRLPDGS…EQDSDLSIIT (61 aa)). A catalytic region spans residues 242–533 (DHRKLGRALD…LIENHAGALP (292 aa)). Zn(2+)-binding residues include cysteine 333, histidine 384, and histidine 510.

The protein belongs to the class-II aminoacyl-tRNA synthetase family. In terms of assembly, homodimer. Requires Zn(2+) as cofactor.

The protein resides in the cytoplasm. The catalysed reaction is tRNA(Thr) + L-threonine + ATP = L-threonyl-tRNA(Thr) + AMP + diphosphate + H(+). Catalyzes the attachment of threonine to tRNA(Thr) in a two-step reaction: L-threonine is first activated by ATP to form Thr-AMP and then transferred to the acceptor end of tRNA(Thr). Also edits incorrectly charged L-seryl-tRNA(Thr). The protein is Threonine--tRNA ligase of Herminiimonas arsenicoxydans.